The following is a 363-amino-acid chain: S-adenosylmethionine:tRNA ribosyltransferase-isomerase (363 aa).

This sequence belongs to the QueA family. In terms of assembly, monomer.

It localises to the cytoplasm. It carries out the reaction 7-aminomethyl-7-carbaguanosine(34) in tRNA + S-adenosyl-L-methionine = epoxyqueuosine(34) in tRNA + adenine + L-methionine + 2 H(+). It participates in tRNA modification; tRNA-queuosine biosynthesis. Transfers and isomerizes the ribose moiety from AdoMet to the 7-aminomethyl group of 7-deazaguanine (preQ1-tRNA) to give epoxyqueuosine (oQ-tRNA). The sequence is that of S-adenosylmethionine:tRNA ribosyltransferase-isomerase from Haemophilus influenzae (strain ATCC 51907 / DSM 11121 / KW20 / Rd).